Reading from the N-terminus, the 171-residue chain is Protein-export protein SecB (171 aa).

It belongs to the SecB family. As to quaternary structure, homotetramer, a dimer of dimers. One homotetramer interacts with 1 SecA dimer.

Its subcellular location is the cytoplasm. In terms of biological role, one of the proteins required for the normal export of preproteins out of the cell cytoplasm. It is a molecular chaperone that binds to a subset of precursor proteins, maintaining them in a translocation-competent state. It also specifically binds to its receptor SecA. The protein is Protein-export protein SecB of Histophilus somni (strain 2336) (Haemophilus somnus).